The primary structure comprises 447 residues: Nisin biosynthesis sensor protein NisK (447 aa).

Transmembrane regions (helical) follow at residues 15–35 and 147–167; these read VIEI…LTFF and TYLF…YHLI. The region spanning 235–447 is the Histidine kinase domain; sequence ALSHDVKTPL…GAEVILKIKK (213 aa). His-238 carries the phosphohistidine; by autocatalysis modification.

It localises to the cell membrane. It carries out the reaction ATP + protein L-histidine = ADP + protein N-phospho-L-histidine.. Its function is as follows. Member of the two-component regulatory system NisK/NisR involved in the regulation of the biosynthesis of lantibiotic nisin. NisK may function as a membrane-associated protein kinase that phosphorylates NisR in response to environmental signals. This Lactococcus lactis subsp. lactis (Streptococcus lactis) protein is Nisin biosynthesis sensor protein NisK (nisK).